We begin with the raw amino-acid sequence, 629 residues long: 1-deoxy-D-xylulose-5-phosphate synthase (629 aa).

Thiamine diphosphate contacts are provided by residues histidine 72 and 113 to 115; that span reads GHA. Residue aspartate 144 coordinates Mg(2+). Thiamine diphosphate contacts are provided by residues 145 to 146, asparagine 174, tyrosine 287, and glutamate 370; that span reads GA. Asparagine 174 serves as a coordination point for Mg(2+).

Belongs to the transketolase family. DXPS subfamily. Homodimer. Mg(2+) is required as a cofactor. It depends on thiamine diphosphate as a cofactor.

The catalysed reaction is D-glyceraldehyde 3-phosphate + pyruvate + H(+) = 1-deoxy-D-xylulose 5-phosphate + CO2. It participates in metabolic intermediate biosynthesis; 1-deoxy-D-xylulose 5-phosphate biosynthesis; 1-deoxy-D-xylulose 5-phosphate from D-glyceraldehyde 3-phosphate and pyruvate: step 1/1. Catalyzes the acyloin condensation reaction between C atoms 2 and 3 of pyruvate and glyceraldehyde 3-phosphate to yield 1-deoxy-D-xylulose-5-phosphate (DXP). This chain is 1-deoxy-D-xylulose-5-phosphate synthase, found in Prochlorococcus marinus (strain MIT 9301).